Here is a 370-residue protein sequence, read N- to C-terminus: Vasopressin V2 receptor (370 aa).

Residues 1–10 are compositionally biased toward polar residues; that stretch reads MLLASTTSAV. The disordered stretch occupies residues 1 to 26; the sequence is MLLASTTSAVPRTLSPPTPAGNGSRE. Topologically, residues 1-37 are extracellular; sequence MLLASTTSAVPRTLSPPTPAGNGSRELLDTRDPLLVQ. An N-linked (GlcNAc...) asparagine glycan is attached at N22. A helical membrane pass occupies residues 38–62; it reads AELALLSTVFVAVALSNGLVLGALA. The Cytoplasmic segment spans residues 63-76; that stretch reads RRVRRGRWAPMHVF. Residues 77-97 form a helical membrane-spanning segment; it reads IGHLCLADLAVALFQVLPQLA. The Extracellular segment spans residues 98-112; it reads WDATDRFRGPDALCR. A helical membrane pass occupies residues 113–134; sequence AVKYLQMVGMYASSYMILAMTL. Over 135-158 the chain is Cytoplasmic; the sequence is DRHRAICRPMLAYRHGGGARWNRP. Residues 159 to 179 form a helical membrane-spanning segment; sequence VLVAWAFSLILSLPQLFIFAQ. Topologically, residues 180–199 are extracellular; the sequence is RDVGNGSGVLDCWAHFAEPW. A helical transmembrane segment spans residues 200-219; it reads GLRAYVTWIALMVFVAPALG. Residues 220 to 270 lie on the Cytoplasmic side of the membrane; that stretch reads IAACQVLIFREIHSSLVPGPAERAGGCRGGHRTGSPSEGARVSAAMAKTVR. A helical transmembrane segment spans residues 271–292; sequence MTLVIVIVYVLCWAPFFLVQLW. The Extracellular portion of the chain corresponds to 293-307; that stretch reads AAWDPQAPLEGAPFV. Residues 308-327 form a helical membrane-spanning segment; sequence LLMLLASLNSCTNPWIYAFF. Residues 328 to 370 lie on the Cytoplasmic side of the membrane; it reads SSSVSSELRSLFCWARSRAPPSLGPQEESCATASSFLAKDTSS. A lipid anchor (S-palmitoyl cysteine) is attached at C340.

The protein belongs to the G-protein coupled receptor 1 family. Vasopressin/oxytocin receptor subfamily. As to quaternary structure, interacts with ARRDC4. Identified in a complex containing at least ARRDC4, V2R and HGS. Interacts with TMEM147.

The protein localises to the cell membrane. Its function is as follows. Receptor for arginine vasopressin. The activity of this receptor is mediated by G proteins which activate adenylate cyclase. Involved in renal water reabsorption. This is Vasopressin V2 receptor (AVPR2) from Canis lupus familiaris (Dog).